The primary structure comprises 84 residues: U4-theraphotoxin-Hhn1b (84 aa).

A signal peptide spans 1-22 (MKVTLTAILTCAAVLVLHTTAA). The propeptide occupies 23 to 47 (EELEESQLMEVGMPDTELAAVDEER). 3 cysteine pairs are disulfide-bonded: cysteine 51–cysteine 65, cysteine 55–cysteine 76, and cysteine 70–cysteine 81.

Belongs to the neurotoxin 12 (Hwtx-2) family. 02 (Hwtx-2) subfamily. In terms of tissue distribution, expressed by the venom gland.

It is found in the secreted. Postsynaptic neurotoxin. The protein is U4-theraphotoxin-Hhn1b of Cyriopagopus hainanus (Chinese bird spider).